A 196-amino-acid polypeptide reads, in one-letter code: Pyridoxal 5'-phosphate synthase subunit PdxT (196 aa).

56–58 (GES) is a binding site for L-glutamine. Catalysis depends on cysteine 85, which acts as the Nucleophile. Residues arginine 113 and 141–142 (IR) each bind L-glutamine. Residues histidine 177 and glutamate 179 each act as charge relay system in the active site.

The protein belongs to the glutaminase PdxT/SNO family. In the presence of PdxS, forms a dodecamer of heterodimers. Only shows activity in the heterodimer.

It catalyses the reaction aldehydo-D-ribose 5-phosphate + D-glyceraldehyde 3-phosphate + L-glutamine = pyridoxal 5'-phosphate + L-glutamate + phosphate + 3 H2O + H(+). It carries out the reaction L-glutamine + H2O = L-glutamate + NH4(+). It participates in cofactor biosynthesis; pyridoxal 5'-phosphate biosynthesis. Catalyzes the hydrolysis of glutamine to glutamate and ammonia as part of the biosynthesis of pyridoxal 5'-phosphate. The resulting ammonia molecule is channeled to the active site of PdxS. The protein is Pyridoxal 5'-phosphate synthase subunit PdxT of Methanospirillum hungatei JF-1 (strain ATCC 27890 / DSM 864 / NBRC 100397 / JF-1).